The primary structure comprises 702 residues: Antigen peptide transporter 2 (702 aa).

Residues 1 to 6 (MALSYL) lie on the Lumenal side of the membrane. Residues 7–27 (RPWVSLLLADMALLGLLQGSL) form a helical membrane-spanning segment. The Cytoplasmic segment spans residues 28–56 (GNLLPQGLPGLWIEGTLRLGVLWGLLKVG). The helical transmembrane segment at 57-77 (ELLGLVGTLLPLLCLATPLFF) threads the bilayer. Residues 78–98 (SLRALVGGTASTSVVRVASAS) are Lumenal-facing. Residues 99 to 119 (WGWLLAGYGAVALSWAVWAVL) form a helical membrane-spanning segment. The Cytoplasmic segment spans residues 120 to 147 (SPAGVQEKEPGQENRTLMKRLLKLSRPD). A helical transmembrane segment spans residues 148-168 (LPFLIAAFFFLVVAVWGETLI). One can recognise an ABC transmembrane type-1 domain in the interval 151–434 (LIAAFFFLVV…LVYMYGDMLS (284 aa)). Topologically, residues 169–186 (PRYSGRVIDILGGDFDPD) are lumenal. The helical transmembrane segment at 187 to 207 (AFASAIFFMCLFSVGSSFSAG) threads the bilayer. Over 208–265 (CRGGSFLFTMSRINLRIREQLFSSLLRQDLGFFQETKTGELNSRLSSDTSLMSRWLPF) the chain is Cytoplasmic. A helical transmembrane segment spans residues 266–286 (NANILLRSLVKVVGLYFFMLQ). The Lumenal segment spans residues 287 to 292 (VSPRLT). Residues 293–313 (FLSLLDLPLTIAAEKVYNPRH) form a helical membrane-spanning segment. The tract at residues 300-388 (PLTIAAEKVY…RRVMALGMQV (89 aa)) is part of the peptide-binding site. The Cytoplasmic portion of the chain corresponds to 314–373 (QAVLKEIQDAVAKAGQVVREAVGGLQTVRSFGAEEQEVSHYKEALERCRQLWWRRDLEKD). Residues 374-394 (VYLVIRRVMALGMQVLILNCG) traverse the membrane as a helical segment. The Lumenal portion of the chain corresponds to 395–407 (VQQILAGEVTRGG). A helical transmembrane segment spans residues 408-428 (LLSFLLYQEEVGQYVRNLVYM). Positions 413-432 (LYQEEVGQYVRNLVYMYGDM) are part of the peptide-binding site. Over 429–702 (YGDMLSNVGA…AHLVQQRLEA (274 aa)) the chain is Cytoplasmic. The 235-residue stretch at 467–701 (VEFQDVSFSY…YAHLVQQRLE (235 aa)) folds into the ABC transporter domain. 502–509 (GPNGSGKS) serves as a coordination point for ATP.

Belongs to the ABC transporter superfamily. ABCB family. MHC peptide exporter (TC 3.A.1.209) subfamily. As to quaternary structure, heterodimer of TAP1 and TAP2 (TAP1-TAP2). A component of the peptide loading complex (PLC), interacts via TAPBP with MHCI heterodimer; this interaction mediates peptide-MHCI assembly. The cofactor is Mg(2+).

It is found in the endoplasmic reticulum membrane. It catalyses the reaction a peptide antigen(in) + ATP + H2O = a peptide antigen(out) + ADP + phosphate + H(+). Its function is as follows. ABC transporter associated with antigen processing. In complex with TAP1 mediates unidirectional translocation of peptide antigens from cytosol to endoplasmic reticulum (ER) for loading onto MHC class I (MHCI) molecules. Uses the chemical energy of ATP to export peptides against the concentration gradient. During the transport cycle alternates between 'inward-facing' state with peptide binding site facing the cytosol to 'outward-facing' state with peptide binding site facing the ER lumen. Peptide antigen binding to ATP-loaded TAP1-TAP2 induces a switch to hydrolysis-competent 'outward-facing' conformation ready for peptide loading onto nascent MHCI molecules. Subsequently ATP hydrolysis resets the transporter to the 'inward facing' state for a new cycle. As a component of the peptide loading complex (PLC), acts as a molecular scaffold essential for peptide-MHCI assembly and antigen presentation. This chain is Antigen peptide transporter 2 (Tap2), found in Mus musculus (Mouse).